The following is a 268-amino-acid chain: Ribosomal RNA small subunit methyltransferase A (268 aa).

6 residues coordinate S-adenosyl-L-methionine: Asn23, Leu25, Gly50, Glu72, Asp94, and Asn116.

This sequence belongs to the class I-like SAM-binding methyltransferase superfamily. rRNA adenine N(6)-methyltransferase family. RsmA subfamily.

It is found in the cytoplasm. The enzyme catalyses adenosine(1518)/adenosine(1519) in 16S rRNA + 4 S-adenosyl-L-methionine = N(6)-dimethyladenosine(1518)/N(6)-dimethyladenosine(1519) in 16S rRNA + 4 S-adenosyl-L-homocysteine + 4 H(+). Specifically dimethylates two adjacent adenosines (A1518 and A1519) in the loop of a conserved hairpin near the 3'-end of 16S rRNA in the 30S particle. May play a critical role in biogenesis of 30S subunits. The polypeptide is Ribosomal RNA small subunit methyltransferase A (Mycoplasmoides gallisepticum (strain R(low / passage 15 / clone 2)) (Mycoplasma gallisepticum)).